Reading from the N-terminus, the 978-residue chain is MSVEIVPLPLRINENESFLSYDDRLNRVVFKTSSGFGVVLLDDPEANRRYYSSDKPIIDAKFSPDLKYSAIQFSDYDIEILHLENGTRYIQTCKYKSSKATILGYYWTTKENILLVTNASLELYAMGLDGSCKLVKESKIKITNCVYSFNCNFGVLFLHSGGTSIQPYFFRTNSFDKLPKFNIEGNGNGFNIKNLYVTKLHEKFFCVYGDQEYIYLYEMTLETIYKIKPIKILLSGPNSIHFVDNLIIVHSELNISIVYDLKTIQRDRERGQTNKKEPEFPISAIPMTLSTINSNNLLYLMNNATKTHSTTSTPIINSINNNNNNNNNPSSSSSPSSSNNSQSSSPTMISSYEQRQIDQHKEQQLQKPNVTLYSKNWRFICPNYIFDPDSGIWYEVTLNFEKISNFLQFDSHKTIPFLQERTLLSAKFALLSIIKTIIEFKTDTLDGIGKIYDDLNKVLFRTTNRQLTESLHKSINQPNNNNNNNNNNNNNNNNNTAQTLNSTGNLSNSISIGGMNTSTDNLTTTTTTSSSISSSPSNSFIGNSKTNVNNLSYLNYKKQQQQQMEKQQHMPNDDEDSFSLIGDGGSGGSGGSFYNTNTNTTSTTNTTTSPSGKSNSNLKLSQSLNNTPNQSPNSRSSLNNSSNNINNNNNNNNNNNNNNNNNNHVVQNRQSRSNQYILINSHDMYDFVFNPIYEKLLIESQKEKEKENDNNNNNTNNNTNNNNNNNIEELNSNEKLELDSKYLIAVVIQYIKSLSFNHCTGISDKLYNLLISLLIDNNMFSRLHQFLQYYVITDSLSIAYKLLSIGEQYPPVLQLSLDMFKRLSMPNIIIETLLERGQVIQAIRLLRSTKETNEQAYQELLTPTYPIQFLASSSNQSNDTLFFSVFKFFETNNLIIPSHPSFDKYIKLFIEKFTEKSLSPLLLDILSNLNNNSTSGGDITPKKNVGGSFLNQSLNNSSPTLRSSNSLNSSPRLQYSNN.

Low complexity-rich tracts occupy residues 311–351 and 479–495; these read TSTP…MISS and NNNN…NNNN. Disordered regions lie at residues 311–363, 474–546, 558–665, and 703–727; these read TSTP…HKEQ, SINQ…NSKT, KQQQ…NNHV, and EKEK…NNNI. Positions 496-515 are enriched in polar residues; it reads TAQTLNSTGNLSNSISIGGM. Residues 516–539 show a composition bias toward low complexity; the sequence is NTSTDNLTTTTTTSSSISSSPSNS. Gly residues predominate over residues 582 to 591; the sequence is GDGGSGGSGG. 2 stretches are compositionally biased toward low complexity: residues 592–663 and 710–727; these read SFYN…NNNN and NNNN…NNNI. The 174-residue stretch at 735 to 908 folds into the Mic1 domain; the sequence is KLELDSKYLI…HPSFDKYIKL (174 aa). Positions 955–978 are disordered; sequence NNSSPTLRSSNSLNSSPRLQYSNN.

The protein belongs to the RMC1 family.

Its subcellular location is the lysosome membrane. The protein resides in the late endosome membrane. May have a role in autophagy. This is Regulator of MON1-CCZ1 complex homolog from Dictyostelium discoideum (Social amoeba).